Consider the following 1196-residue polypeptide: Calcium-activated potassium channel subunit alpha-1 (1196 aa).

The Extracellular segment spans residues 1–52 (MATWNASQIILNSMSNIIESPQSKPRPVMASNGASLFIPVTMEVPCDQGTRM). Residues 53-73 (WWAFLASSMVTFFGGLFIILV) traverse the membrane as a helical segment. Over 74 to 146 (WRTFKYLWTV…MISAQTLTGR (73 aa)) the chain is Cytoplasmic. Residues 147 to 167 (VLVVTVFALSIGALMIYFIDS) form a helical membrane-spanning segment. Residues 168-182 (SNPIESCQNFYKDFT) lie on the Extracellular side of the membrane. A helical transmembrane segment spans residues 183-203 (LQIDMAFNIFFLLYFGLRFIA). The Cytoplasmic segment spans residues 204 to 207 (ANDK). Residues 208–228 (LWFWLEVNSVVDFFTVPPVFV) traverse the membrane as a helical segment. Over 229 to 232 (SVYL) the chain is Extracellular. The helical; Voltage-sensor transmembrane segment at 233–253 (NRSWLGLRFLRALRLIQFSEI) threads the bilayer. At 254-268 (LQFLNILKTSNSIKL) the chain is on the cytoplasmic side. A helical membrane pass occupies residues 269-289 (VNLCSIFISTWLTAAGFIHLV). Over 290–303 (ENSGDPWRNFENSQ) the chain is Extracellular. The segment at residues 304–326 (DLSYWECMYLLMVTMSTVGYGDV) is an intramembrane region (pore-forming). The Selectivity for potassium signature appears at 320 to 323 (TVGY). Topologically, residues 327-335 (YAKTTLGRL) are extracellular. Residues 336 to 356 (FMVFFILGGLAMFASYVPEII) form a helical membrane-spanning segment. At 357 to 1196 (ELIGNRKKYG…PPIREVEDEC (840 aa)) the chain is on the cytoplasmic side. An RCK N-terminal 1 domain is found at 375-517 (RKHIVVCGHI…WNWKDGDDAI (143 aa)). Residues Glu407, Gln430, and Glu432 each contribute to the Mg(2+) site. Residues 524 to 544 (LGFIAQSCLAQGLSTMLANLF) form a segment S7 region. The interval 581-601 (LSFPAVCELCFVKLKLLMIAI) is segment S8. Positions 645–649 (CKACH) are heme-binding motif. The segment at 672–697 (SALSPKKKQRNGGMRHSPNTSPNMMR) is disordered. The interval 748-768 (VLSGHVVVCIFGDMTSALIGV) is segment S9. The region spanning 750–894 (SGHVVVCIFG…MERSSPDNSP (145 aa)) is the RCK N-terminal 2 domain. The Calcium bowl motif lies at 914-936 (TELVNDSNVQFLDQDDDDDPDTE). Ca(2+)-binding residues include Gln923, Asp926, Asp929, and Asp931. A segment S10 region spans residues 943–963 (FACGTAFAVSVLDSLMSATYF). The segment covering 1098–1119 (ASLSHSSHSSHSSSKKSSSVTS) has biased composition (low complexity). A disordered region spans residues 1098–1149 (ASLSHSSHSSHSSSKKSSSVTSILHTASANRQNRVKARDSRDKQKMGQAEKK). The segment covering 1120–1129 (ILHTASANRQ) has biased composition (polar residues). Over residues 1133–1149 (KARDSRDKQKMGQAEKK) the composition is skewed to basic and acidic residues.

Belongs to the potassium channel family. Calcium-activated (TC 1.A.1.3) subfamily. KCa1.1/KCNMA1 sub-subfamily. As to quaternary structure, homotetramer; which constitutes the calcium-activated potassium channel. As to expression, expressed in both the somites and neural tube of 1 day embryos. Within the nervous system, it is restricted to dorsal parts, and expressed centrally in regions dedicated to processing of sensory information. Six hours later, it is expressed segmentally within the somites. At this time, it is expressed in a primary sensory organ, the trigeminal ganglion. By 2 days, it is also expressed in other primary sensory organs, such as the otic vesicle, and the eye. Within the retina, it is expressed to an internal layer. In the developing otic vesicle, it is abundantly expressed near the apical surface. Isoform 3 is neural-specific, and is only expressed during late stages of neuronal differentiation.

Its subcellular location is the cell membrane. It carries out the reaction K(+)(in) = K(+)(out). Ethanol and carbon monoxide-bound heme increase channel activation. Heme inhibits channel activation. Functionally, potassium channel activated by both membrane depolarization or increase in cytosolic Ca(2+) that mediates export of K(+). It is also activated by the concentration of cytosolic Mg(2+). Its activation dampens the excitatory events that elevate the cytosolic Ca(2+) concentration and/or depolarize the cell membrane. It therefore contributes to repolarization of the membrane potential. Plays a key role in controlling excitability in a number of systems, such as regulation of the contraction of smooth muscle, the tuning of hair cells in the cochlea, regulation of transmitter release, and innate immunity. In smooth muscles, its activation by high level of Ca(2+), caused by ryanodine receptors in the sarcoplasmic reticulum, regulates the membrane potential. In cochlea cells, its number and kinetic properties partly determine the characteristic frequency of each hair cell and thereby helps to establish a tonotopic map. Highly sensitive to both iberiotoxin (IbTx) and charybdotoxin (CTX). The sequence is that of Calcium-activated potassium channel subunit alpha-1 (kcnma1) from Xenopus laevis (African clawed frog).